The chain runs to 643 residues: Transcription elongation factor B polypeptide 3 (643 aa).

Positions 9–82 (DVVRHYQRSI…TKWKAMVAKE (74 aa)) constitute a TFIIS N-terminal domain. 2 disordered regions span residues 86 to 289 (IAST…MGAN) and 302 to 351 (SSKK…SKKP). A compositionally biased stretch (basic and acidic residues) spans 94-106 (HNEEDSGKTKSSD). Polar residues predominate over residues 114 to 124 (KGGNSSSGEDL). At serine 120 the chain carries Phosphoserine. The segment covering 127-136 (SKHKSKHAKS) has biased composition (basic residues). Basic and acidic residues-rich tracts occupy residues 164–198 (HDKSKDRDKDREGQKEAKEHKEKKSNGEHKSKDSS) and 207–237 (SKSESHKSEHTKSKHEKDKTSHSELKEVKDK). Basic residues predominate over residues 238 to 255 (SSKHKSSSSKSSKRSHSP). Positions 302 to 336 (SSKKSSSNSKSKFVAKPTAAPSSSALSAPTTAGSS) are enriched in low complexity. The tract at residues 413–571 (AQGISSKTMR…PPRSVQRKQE (159 aa)) is activation domain. The interval 439 to 448 (SLFDLCTRVL) is interacting with Elongin BC complex.

The protein localises to the nucleus. SIII, also known as elongin, is a general transcription elongation factor that increases the RNA polymerase II transcription elongation past template-encoded arresting sites. Subunit A is transcriptionally active and its transcription activity is strongly enhanced by binding to the dimeric complex of the SIII regulatory subunits B and C (elongin BC complex). May play an important role in metamorphosis. The chain is Transcription elongation factor B polypeptide 3 (EloA) from Drosophila melanogaster (Fruit fly).